The chain runs to 212 residues: Probable nicotinate-nucleotide adenylyltransferase (212 aa).

This sequence belongs to the NadD family.

The catalysed reaction is nicotinate beta-D-ribonucleotide + ATP + H(+) = deamido-NAD(+) + diphosphate. It functions in the pathway cofactor biosynthesis; NAD(+) biosynthesis; deamido-NAD(+) from nicotinate D-ribonucleotide: step 1/1. Functionally, catalyzes the reversible adenylation of nicotinate mononucleotide (NaMN) to nicotinic acid adenine dinucleotide (NaAD). The chain is Probable nicotinate-nucleotide adenylyltransferase from Mycobacterium avium (strain 104).